A 416-amino-acid chain; its full sequence is GTPase Obg (416 aa).

Residues 1 to 157 enclose the Obg domain; it reads MFQDVLVITV…RRLRLELMLI (157 aa). Disordered stretches follow at residues 25 to 44 and 62 to 82; these read EKFV…GGSV and TYKA…RGGE. Residues 32–42 show a composition bias toward gly residues; sequence GPDGGDGGRGG. Residues 63–72 show a composition bias toward basic and acidic residues; it reads YKAEDGEHGR. In terms of domain architecture, OBG-type G spans 158-324; that stretch reads ADVGLVGYPN…LKEALHALVR (167 aa). GTP is bound by residues 164 to 171, 189 to 193, 211 to 214, 277 to 280, and 305 to 307; these read GYPNAGKS, FTTLS, DIPG, NKVD, and SAL. Residues S171 and T191 each contribute to the Mg(2+) site. Positions 336-414 constitute an OCT domain; that stretch reads PRKEVQAGVE…IGGLEFEYIP (79 aa).

Belongs to the TRAFAC class OBG-HflX-like GTPase superfamily. OBG GTPase family. As to quaternary structure, monomer. It depends on Mg(2+) as a cofactor.

The protein localises to the cytoplasm. In terms of biological role, an essential GTPase which binds GTP, GDP and possibly (p)ppGpp with moderate affinity, with high nucleotide exchange rates and a fairly low GTP hydrolysis rate. Plays a role in control of the cell cycle, stress response, ribosome biogenesis and in those bacteria that undergo differentiation, in morphogenesis control. The protein is GTPase Obg of Thermus thermophilus (strain ATCC BAA-163 / DSM 7039 / HB27).